The primary structure comprises 116 residues: Large ribosomal subunit protein uL18 (116 aa).

The protein belongs to the universal ribosomal protein uL18 family. In terms of assembly, part of the 50S ribosomal subunit; part of the 5S rRNA/L5/L18/L25 subcomplex. Contacts the 5S and 23S rRNAs.

Its function is as follows. This is one of the proteins that bind and probably mediate the attachment of the 5S RNA into the large ribosomal subunit, where it forms part of the central protuberance. This is Large ribosomal subunit protein uL18 from Ectopseudomonas mendocina (strain ymp) (Pseudomonas mendocina).